Here is a 314-residue protein sequence, read N- to C-terminus: Methionyl-tRNA formyltransferase (314 aa).

110 to 113 lines the (6S)-5,6,7,8-tetrahydrofolate pocket; that stretch reads SLLP.

Belongs to the Fmt family.

It catalyses the reaction L-methionyl-tRNA(fMet) + (6R)-10-formyltetrahydrofolate = N-formyl-L-methionyl-tRNA(fMet) + (6S)-5,6,7,8-tetrahydrofolate + H(+). Functionally, attaches a formyl group to the free amino group of methionyl-tRNA(fMet). The formyl group appears to play a dual role in the initiator identity of N-formylmethionyl-tRNA by promoting its recognition by IF2 and preventing the misappropriation of this tRNA by the elongation apparatus. The polypeptide is Methionyl-tRNA formyltransferase (Bacillus cereus (strain AH187)).